The following is a 542-amino-acid chain: Ribulokinase 2 (542 aa).

This sequence belongs to the ribulokinase family.

It carries out the reaction D-ribulose + ATP = D-ribulose 5-phosphate + ADP + H(+). It catalyses the reaction L-ribulose + ATP = L-ribulose 5-phosphate + ADP + H(+). It participates in carbohydrate degradation; L-arabinose degradation via L-ribulose; D-xylulose 5-phosphate from L-arabinose (bacterial route): step 2/3. This chain is Ribulokinase 2, found in Staphylococcus saprophyticus subsp. saprophyticus (strain ATCC 15305 / DSM 20229 / NCIMB 8711 / NCTC 7292 / S-41).